The sequence spans 298 residues: Syntenin-1 (298 aa).

The residue at position 2 (Ser2) is an N-acetylserine. An interaction with PDCD6IP region spans residues 2 to 60 (SLYPSLEDLKVDKVIQAQTAFSANPANPAILSEASAPIPHDGNLYPRLYPELSQYMGLS). 3 consecutive short sequence motifs (LYPX(n)L motif) follow at residues 3–7 (LYPSL), 45–49 (LYPRL), and 49–53 (LYPEL). Ser6 is modified (phosphoserine). Tyr46 carries the post-translational modification Phosphotyrosine. 2 consecutive PDZ domains span residues 114–193 (EVIL…IRDR) and 198–273 (TITM…MPAF). Residues Asn215 and 250-251 (KD) contribute to the a 1,2-diacyl-sn-glycero-3-phospho-(1D-myo-inositol-4,5-bisphosphate) site.

In terms of assembly, monomer and homodimer. Interacts with SDC1, SDC2, SDC3, SDC4, NRXN2, EPHA7, EPHB1, NF2 isoform 1, TGFA and IL5RA. Interacts with NFASC and PTPRJ. Interacts with SDCBP2. Interacts with PDCD6IP. Forms a complex with PDCD6IP and SDC2. Interacts (via C-terminus) with TGFBR1. Binds to FZD7; this interaction is increased by inositol trisphosphate (IP3). Interacts with SMO. In terms of processing, phosphorylated on tyrosine residues. Expressed in lung cancers, including adenocarcinoma, squamous cell carcinoma and small-cell carcinoma (at protein level). Widely expressed. Expressed in fetal kidney, liver, lung and brain. In adult highest expression in heart and placenta.

Its subcellular location is the cell junction. It localises to the focal adhesion. The protein localises to the adherens junction. It is found in the cell membrane. The protein resides in the endoplasmic reticulum membrane. Its subcellular location is the nucleus. It localises to the melanosome. The protein localises to the cytoplasm. It is found in the cytosol. The protein resides in the cytoskeleton. Its subcellular location is the secreted. It localises to the extracellular exosome. The protein localises to the membrane raft. Functionally, multifunctional adapter protein involved in diverse array of functions including trafficking of transmembrane proteins, neuro and immunomodulation, exosome biogenesis, and tumorigenesis. Positively regulates TGFB1-mediated SMAD2/3 activation and TGFB1-induced epithelial-to-mesenchymal transition (EMT) and cell migration in various cell types. May increase TGFB1 signaling by enhancing cell-surface expression of TGFR1 by preventing the interaction between TGFR1 and CAV1 and subsequent CAV1-dependent internalization and degradation of TGFR1. In concert with SDC1/4 and PDCD6IP, regulates exosome biogenesis. Regulates migration, growth, proliferation, and cell cycle progression in a variety of cancer types. In adherens junctions may function to couple syndecans to cytoskeletal proteins or signaling components. Seems to couple transcription factor SOX4 to the IL-5 receptor (IL5RA). May also play a role in vesicular trafficking. Seems to be required for the targeting of TGFA to the cell surface in the early secretory pathway. The chain is Syntenin-1 (SDCBP) from Homo sapiens (Human).